The sequence spans 194 residues: Outer-membrane lipoprotein LolB (194 aa).

A signal peptide spans 1-18; it reads MTLLLRLFTLGCLLLLAG. Residue Cys-19 is the site of N-palmitoyl cysteine attachment. Cys-19 is lipidated: S-diacylglycerol cysteine.

Belongs to the LolB family. In terms of assembly, monomer.

It localises to the cell outer membrane. Functionally, plays a critical role in the incorporation of lipoproteins in the outer membrane after they are released by the LolA protein. The chain is Outer-membrane lipoprotein LolB from Aeromonas hydrophila subsp. hydrophila (strain ATCC 7966 / DSM 30187 / BCRC 13018 / CCUG 14551 / JCM 1027 / KCTC 2358 / NCIMB 9240 / NCTC 8049).